We begin with the raw amino-acid sequence, 299 residues long: Protein U23 (299 aa).

Positions methionine 1–cysteine 27 are cleaved as a signal peptide. The helical transmembrane segment at leucine 247–leucine 267 threads the bilayer.

It is found in the host membrane. The chain is Protein U23 (U23) from Human herpesvirus 6B (strain Z29) (HHV-6 variant B).